We begin with the raw amino-acid sequence, 430 residues long: Asparagine--tRNA ligase (430 aa).

Belongs to the class-II aminoacyl-tRNA synthetase family. Homodimer.

It is found in the cytoplasm. It catalyses the reaction tRNA(Asn) + L-asparagine + ATP = L-asparaginyl-tRNA(Asn) + AMP + diphosphate + H(+). The chain is Asparagine--tRNA ligase from Oceanobacillus iheyensis (strain DSM 14371 / CIP 107618 / JCM 11309 / KCTC 3954 / HTE831).